The chain runs to 231 residues: Chlorophyll a-b binding protein 1B-20, chloroplastic (231 aa).

The segment at 1–25 (RIQAYRFRTRVPPSPAASGSPRSTR) is disordered. The N-terminal 31 residues, 1-31 (RIQAYRFRTRVPPSPAASGSPRSTRRDVAVQ), are a transit peptide targeting the chloroplast. W36 is a chlorophyll b binding site. Chlorophyll a is bound at residue F56. Residues R80, S118, E133, and R136 each coordinate chlorophyll b. The chlorophyll a site is built by K182, E183, N186, R188, Q200, and H215. The helical transmembrane segment at 183–199 (ELANGRLAMLAFLGFLV) threads the bilayer.

Belongs to the light-harvesting chlorophyll a/b-binding (LHC) protein family. As to quaternary structure, the LHC complex consists of chlorophyll a-b binding proteins. It depends on Binds at least 14 chlorophylls (8 Chl-a and 6 Chl-b) and carotenoids such as lutein and neoxanthin. as a cofactor. Photoregulated by reversible phosphorylation of its threonine residues.

Its subcellular location is the plastid. It is found in the chloroplast thylakoid membrane. Functionally, the light-harvesting complex (LHC) functions as a light receptor, it captures and delivers excitation energy to photosystems with which it is closely associated. In Hordeum vulgare (Barley), this protein is Chlorophyll a-b binding protein 1B-20, chloroplastic (LHC Ib-20).